The primary structure comprises 355 residues: MKPSSSRASFAQRHWQHDGWLATLLRPLSALTAWHVARRRAQYQTGRRPVYRAPVPVMVIGNIYVGGTGKTPVVIATVQALRERGWTPGVISRGYGARIGPQPRVGQGRELTPASHGDEPALIAHATGAPVAVHPRRALAAQALLSQYPQVDVIVSDDGLQHLAIARDIEIAVQDDRGIGNGRLLPAGPLREPAARLDTVDAIITNRAPQSSATPTAASGQGPRRADMRLEPEAARHLQSGARRPLADFADARAFPAVAAAAGIGNPERYFATLRAAGLHPEPCLALPDHYDYRRSPFEAIVADAILVTSKDAIKCRGLDDPRLWEVPVQARLSDPGLFDWLEARLRQAAAAIAR.

64–71 (YVGGTGKT) provides a ligand contact to ATP. Residues 206–226 (NRAPQSSATPTAASGQGPRRA) form a disordered region. Over residues 208–222 (APQSSATPTAASGQG) the composition is skewed to low complexity.

Belongs to the LpxK family.

It catalyses the reaction a lipid A disaccharide + ATP = a lipid IVA + ADP + H(+). It functions in the pathway glycolipid biosynthesis; lipid IV(A) biosynthesis; lipid IV(A) from (3R)-3-hydroxytetradecanoyl-[acyl-carrier-protein] and UDP-N-acetyl-alpha-D-glucosamine: step 6/6. Functionally, transfers the gamma-phosphate of ATP to the 4'-position of a tetraacyldisaccharide 1-phosphate intermediate (termed DS-1-P) to form tetraacyldisaccharide 1,4'-bis-phosphate (lipid IVA). The protein is Tetraacyldisaccharide 4'-kinase of Bordetella petrii (strain ATCC BAA-461 / DSM 12804 / CCUG 43448).